Consider the following 540-residue polypeptide: Chaperonin GroEL 4 (540 aa).

Residues 29–32, 86–90, Gly413, 477–479, and Asp493 contribute to the ATP site; these read TLGP, DGTTT, and NAA.

The protein belongs to the chaperonin (HSP60) family. Forms a cylinder of 14 subunits composed of two heptameric rings stacked back-to-back. Interacts with the co-chaperonin GroES.

It is found in the cytoplasm. It catalyses the reaction ATP + H2O + a folded polypeptide = ADP + phosphate + an unfolded polypeptide.. Its function is as follows. Together with its co-chaperonin GroES, plays an essential role in assisting protein folding. The GroEL-GroES system forms a nano-cage that allows encapsulation of the non-native substrate proteins and provides a physical environment optimized to promote and accelerate protein folding. This chain is Chaperonin GroEL 4, found in Frankia alni (strain DSM 45986 / CECT 9034 / ACN14a).